Consider the following 287-residue polypeptide: 33 kDa chaperonin (287 aa).

2 disulfide bridges follow: Cys231-Cys233 and Cys264-Cys267.

The protein belongs to the HSP33 family. Under oxidizing conditions two disulfide bonds are formed involving the reactive cysteines. Under reducing conditions zinc is bound to the reactive cysteines and the protein is inactive.

Its subcellular location is the cytoplasm. In terms of biological role, redox regulated molecular chaperone. Protects both thermally unfolding and oxidatively damaged proteins from irreversible aggregation. Plays an important role in the bacterial defense system toward oxidative stress. This is 33 kDa chaperonin from Thermosipho melanesiensis (strain DSM 12029 / CIP 104789 / BI429).